A 317-amino-acid chain; its full sequence is Olfactory receptor 2F1 (317 aa).

At 1–24 the chain is on the extracellular side; that stretch reads MGTDNQTWVSEFILLGLSSDWDTR. A glycan (N-linked (GlcNAc...) asparagine) is linked at asparagine 5. Residues 25 to 48 form a helical membrane-spanning segment; sequence VSLFVLFLVMYVVTVLGNCLIVLL. Residues 49–57 lie on the Cytoplasmic side of the membrane; it reads IRLDSRLHT. The chain crosses the membrane as a helical span at residues 58 to 79; it reads PMYFFLTNLSLVDVSYATSVVP. At 80–100 the chain is on the extracellular side; sequence QLLAHFLAEHKAIPFQSCAAQ. A disulfide bridge links cysteine 97 with cysteine 189. Residues 101-120 form a helical membrane-spanning segment; the sequence is LFFSLALGGIEFVLLAVMAY. The Cytoplasmic segment spans residues 121–139; sequence DRYVAVCDALRYSAIMHGG. The chain crosses the membrane as a helical span at residues 140–160; sequence LCARLAITSWVSGFISSPVQT. Residues 161–200 are Extracellular-facing; it reads AITFQLPMCRNKFIDHISCELLAVVRLACVDTSSNEVTIM. The chain crosses the membrane as a helical span at residues 201 to 222; that stretch reads VSSIVLLMTPFCLVLLSYIQII. Residues 223–236 lie on the Cytoplasmic side of the membrane; sequence STILKIQSREGRKK. Residues 237–261 form a helical membrane-spanning segment; the sequence is AFHTCASHLTVVALCYGVAIFTYIQ. At 262-272 the chain is on the extracellular side; that stretch reads PHSSPSVLQEK. The helical transmembrane segment at 273 to 292 threads the bilayer; that stretch reads LFSVFYAILTPMLNPMIYSL. Over 293–317 the chain is Cytoplasmic; that stretch reads RNKEVKGAWQKLLWKFSGLTSKLAT.

Belongs to the G-protein coupled receptor 1 family.

The protein resides in the cell membrane. Its function is as follows. Odorant receptor. This Homo sapiens (Human) protein is Olfactory receptor 2F1 (OR2F1).